A 215-amino-acid chain; its full sequence is Adenylate kinase (215 aa).

10–15 (GAGKGT) lines the ATP pocket. An NMP region spans residues 30 to 59 (STGDILRENVKNETELGKKAKEYMDKGLLV). AMP-binding positions include Thr-31, Arg-36, 57–59 (LLV), 85–88 (GFPR), and Gln-92. The interval 126–163 (GRRICKNCGASFHVIYRPPQKEGVCDVCGGELYQREDD) is LID. An ATP-binding site is contributed by Arg-127. Residues Cys-130 and Cys-133 each coordinate Zn(2+). 136–137 (SF) serves as a coordination point for ATP. Cys-150 and Cys-153 together coordinate Zn(2+). AMP is bound by residues Arg-160 and Arg-171. Gln-198 contributes to the ATP binding site.

Belongs to the adenylate kinase family. In terms of assembly, monomer.

Its subcellular location is the cytoplasm. It carries out the reaction AMP + ATP = 2 ADP. It functions in the pathway purine metabolism; AMP biosynthesis via salvage pathway; AMP from ADP: step 1/1. In terms of biological role, catalyzes the reversible transfer of the terminal phosphate group between ATP and AMP. Plays an important role in cellular energy homeostasis and in adenine nucleotide metabolism. The sequence is that of Adenylate kinase from Caldicellulosiruptor bescii (strain ATCC BAA-1888 / DSM 6725 / KCTC 15123 / Z-1320) (Anaerocellum thermophilum).